The chain runs to 343 residues: Protein RecA (343 aa).

ATP is bound at residue 66 to 73 (GPESSGKT). Residues 319–343 (IERQIREKHLPKRSAKADEAESAEA) form a disordered region.

The protein belongs to the RecA family.

Its subcellular location is the cytoplasm. Its function is as follows. Can catalyze the hydrolysis of ATP in the presence of single-stranded DNA, the ATP-dependent uptake of single-stranded DNA by duplex DNA, and the ATP-dependent hybridization of homologous single-stranded DNAs. It interacts with LexA causing its activation and leading to its autocatalytic cleavage. This is Protein RecA from Thioalkalivibrio sulfidiphilus (strain HL-EbGR7).